We begin with the raw amino-acid sequence, 297 residues long: tRNA dimethylallyltransferase (297 aa).

10 to 17 contacts ATP; that stretch reads GITASGKS. 12-17 lines the substrate pocket; that stretch reads TASGKS. An interaction with substrate tRNA region spans residues 36–39; sequence DSKQ.

The protein belongs to the IPP transferase family. Monomer. Mg(2+) is required as a cofactor.

It carries out the reaction adenosine(37) in tRNA + dimethylallyl diphosphate = N(6)-dimethylallyladenosine(37) in tRNA + diphosphate. Functionally, catalyzes the transfer of a dimethylallyl group onto the adenine at position 37 in tRNAs that read codons beginning with uridine, leading to the formation of N6-(dimethylallyl)adenosine (i(6)A). The protein is tRNA dimethylallyltransferase of Wolbachia pipientis wMel.